The chain runs to 363 residues: Uptake hydrogenase small subunit (363 aa).

Positions 1–43 (MIETFYEVMRRQGISRRSFLKYCSLTATSLGLSPVFVPKIVHA) form a signal peptide, tat-type signal. The [4Fe-4S] cluster site is built by C60, C63, C158, C192, H230, C233, C258, and C264. [3Fe-4S] cluster is bound by residues C273, C292, and C295.

This sequence belongs to the [NiFe]/[NiFeSe] hydrogenase small subunit family. Heterodimer of a large and a small subunit. It depends on [4Fe-4S] cluster as a cofactor. Requires [3Fe-4S] cluster as cofactor. In terms of processing, predicted to be exported by the Tat system. The position of the signal peptide cleavage has not been experimentally proven.

It localises to the cell membrane. It catalyses the reaction H2 + A = AH2. Functionally, this enzyme recycles the H(2) produced by nitrogenase to increase the production of ATP and to protect nitrogenase against inhibition or damage by O(2) under carbon- or phosphate-limited conditions. The sequence is that of Uptake hydrogenase small subunit (hupS) from Alcaligenes hydrogenophilus.